Consider the following 265-residue polypeptide: Energy-coupling factor transporter transmembrane protein EcfT (265 aa).

The next 5 helical transmembrane spans lie at 32–52 (MVLL…VFII), 72–92 (LVII…GRVI), 115–135 (LIML…IALT), 150–170 (VPAH…PTLM), and 245–265 (LAAF…RFIW).

The protein belongs to the energy-coupling factor EcfT family. As to quaternary structure, forms a stable energy-coupling factor (ECF) transporter complex composed of 2 membrane-embedded substrate-binding proteins (S component), 2 ATP-binding proteins (A component) and 2 transmembrane proteins (T component). May be able to interact with more than 1 S component at a time.

The protein resides in the cell membrane. Functionally, transmembrane (T) component of an energy-coupling factor (ECF) ABC-transporter complex. Unlike classic ABC transporters this ECF transporter provides the energy necessary to transport a number of different substrates. The polypeptide is Energy-coupling factor transporter transmembrane protein EcfT (Thermosediminibacter oceani (strain ATCC BAA-1034 / DSM 16646 / JW/IW-1228P)).